The chain runs to 3503 residues: Protein dachsous (3503 aa).

The N-terminal stretch at 1 to 20 (MLRSSLLILLAIVLLGSSQA) is a signal peptide. Over 21-3045 (ASHDQERERK…SSSGSIGDWA (3025 aa)) the chain is Extracellular. Cadherin domains are found at residues 22-121 (SHDQ…APTF), 122-233 (PQTS…QPIF), 234-340 (NQSR…QPTI), 345-451 (LSDD…PPEF), 452-558 (EQDL…EPIF), 559-662 (DQSF…RPVF), 663-774 (YPRE…PPIF), 775-878 (EKAR…APEF), 879-983 (EASM…PPVF), 984-1100 (EKDE…DPKF), 1101-1203 (QKSK…APEI), 1205-1312 (DPQE…RPTF), 1313-1432 (TSSS…APEW), and 1433-1549 (PQDP…APHF). N220 and N234 each carry an N-linked (GlcNAc...) asparagine glycan. S236 bears the Phosphoserine mark. Residues N245, N381, and N416 are each glycosylated (N-linked (GlcNAc...) asparagine). Residues N564, N594, and N743 are each glycosylated (N-linked (GlcNAc...) asparagine). N966, N991, N1006, N1029, N1143, and N1236 each carry an N-linked (GlcNAc...) asparagine glycan. N-linked (GlcNAc...) asparagine glycosylation is found at N1453, N1479, N1524, and N1553. 13 consecutive Cadherin domains span residues 1556–1666 (GGKT…PPRF), 1667–1794 (LQAV…SPEF), 1796–1899 (PGSC…APRF), 1900–2004 (KLSK…RPIF), 2005–2111 (ERYP…TPVL), 2114–2269 (QNET…SPKF), 2270–2375 (SQKQ…QPTF), 2375–2479 (FPPN…APVF), 2489–2595 (AILP…RSQF), 2596–2699 (LQNQ…FPIF), 2701–2809 (RSAK…EPKF), 2810–2916 (PLTE…TPQF), and 2919–3028 (RTYR…HPGT). N-linked (GlcNAc...) asparagine glycans are attached at residues N1700, N1884, and N1940. N2115 is a glycosylation site (N-linked (GlcNAc...) asparagine). Residues 2193–2225 (GRALHYEEEIDESSEEDPNNSTRSQRALTSSSF) are disordered. Residues 2200–2210 (EEIDESSEEDP) are compositionally biased toward acidic residues. Residues N2211 and N2212 are each glycosylated (N-linked (GlcNAc...) asparagine). Residues 2211-2225 (NNSTRSQRALTSSSF) are compositionally biased toward polar residues. 6 N-linked (GlcNAc...) asparagine glycosylation sites follow: N2421, N2511, N2520, N2547, N2588, and N2678. Residues N2845 and N2967 are each glycosylated (N-linked (GlcNAc...) asparagine). The chain crosses the membrane as a helical span at residues 3046 to 3066 (IGLLVAFLLVLCAAAGIFLFI). The Cytoplasmic segment spans residues 3067 to 3503 (HMRSRKPRNA…SQRGNVGTRM (437 aa)). Disordered stretches follow at residues 3114 to 3195 (AGAA…GRIS), 3360 to 3404 (LSEH…IPPP), and 3431 to 3503 (LPRS…GTRM). 2 stretches are compositionally biased toward low complexity: residues 3133-3159 (GAHA…SGRG) and 3363-3372 (HSGSGASSSA). Residues 3391–3404 (KPPPSAPPTHIPPP) show a composition bias toward pro residues. Residues 3440 to 3463 (ASGSFSTSSAMSPSFSPSLSPLAT) show a composition bias toward low complexity. Phosphoserine occurs at positions 3465 and 3469. Residues 3492–3503 (QPSQRGNVGTRM) are compositionally biased toward polar residues.

In terms of assembly, interacts (via cytoplasmic region) with Myo31DF. Post-translationally, phosphorylated by fj on Ser/Thr of cadherin domains. In terms of tissue distribution, expressed in embryonic ectoderm. In larvae, expression is restricted to imaginal disks and brain.

Its subcellular location is the cell membrane. It localises to the cell junction. Required for normal morphogenesis of adult structures derived from imaginal disks. Plays a role in planar cell polarity and in determining body left-right asymmetry. Expression in segment H1 of the imaginal ring and interaction with Myo31DF are required to induce changes of cell shape and orientation in segment H2, which then gives rise to normal, dextral looping of the adult hindgut. The chain is Protein dachsous (ds) from Drosophila melanogaster (Fruit fly).